Reading from the N-terminus, the 150-residue chain is Deoxyuridine 5'-triphosphate nucleotidohydrolase (150 aa).

Substrate is bound by residues 69–71, Asn82, 86–88, and Lys96; these read RSG and LID.

Belongs to the dUTPase family. The cofactor is Mg(2+).

The enzyme catalyses dUTP + H2O = dUMP + diphosphate + H(+). Its pathway is pyrimidine metabolism; dUMP biosynthesis; dUMP from dCTP (dUTP route): step 2/2. Functionally, this enzyme is involved in nucleotide metabolism: it produces dUMP, the immediate precursor of thymidine nucleotides and it decreases the intracellular concentration of dUTP so that uracil cannot be incorporated into DNA. The chain is Deoxyuridine 5'-triphosphate nucleotidohydrolase from Neisseria meningitidis serogroup A / serotype 4A (strain DSM 15465 / Z2491).